Here is a 465-residue protein sequence, read N- to C-terminus: GDNF family receptor alpha-2 (465 aa).

The first 21 residues, 1–21 (MILANAFCIVLFVDETLRSLA), serve as a signal peptide directing secretion. 14 disulfide bridges follow: C40/C93, C47/C53, C63/C78, C95/C105, C159/C220, C166/C172, C183/C198, C193/C239, C222/C227, C249/C321, C256/C262, C273/C291, C283/C345, and C323/C333. Residues N355, N387, and N412 are each glycosylated (N-linked (GlcNAc...) asparagine). S445 carries GPI-anchor amidated serine lipidation. Residues 446–465 (RHRAARILPAVPIVLLKLLL) constitute a propeptide, removed in mature form.

It belongs to the GDNFR family. As to quaternary structure, interacts with NRTN ligand and RET: forms a 2:2:2 ternary complex composed of NRTN ligand, GFRA2 and RET receptor.

It is found in the cell membrane. Receptor for neurturin (NRTN), a growth factor that supports the survival of sympathetic neurons. NRTN-binding leads to autophosphorylation and activation of the RET receptor. The protein is GDNF family receptor alpha-2 (GFRA2) of Gallus gallus (Chicken).